A 527-amino-acid polypeptide reads, in one-letter code: Lysine--tRNA ligase (527 aa).

Residues 44 to 52 (PSGLPHIGT) carry the 'HIGH' region motif. Residues 290 to 294 (KISKS) carry the 'KMSKS' region motif. Lysine 293 contacts ATP.

It belongs to the class-I aminoacyl-tRNA synthetase family.

The protein localises to the cytoplasm. It catalyses the reaction tRNA(Lys) + L-lysine + ATP = L-lysyl-tRNA(Lys) + AMP + diphosphate. The polypeptide is Lysine--tRNA ligase (Roseobacter denitrificans (strain ATCC 33942 / OCh 114) (Erythrobacter sp. (strain OCh 114))).